The chain runs to 691 residues: Replication and transcription activator (691 aa).

Residues Thr366 and Thr367 are each glycosylated (O-linked (GlcNAc) threonine; by host). Disordered regions lie at residues 482-582 (EASG…SLPP) and 626-677 (LDTP…QESG). Residues 504 to 513 (TAAATAAEAT) are compositionally biased toward low complexity. The segment covering 515–531 (PKRKQRSKERSSKKRKA) has biased composition (basic residues). Over residues 539–556 (TTPSTTTPGTSLGSITTP) the composition is skewed to low complexity. Over residues 655-677 (EYTQLQPVRATSATPANEVQESG) the composition is skewed to polar residues.

The protein belongs to the herpesviridae TAF50 family. In terms of assembly, homotetramer. Interacts with KTA/ORF57. Interacts with host PARP1; this interaction negatively regulates RTA/ORF50 transactivation activity. Interacts with host SMC5 and SMC6; these interactions remove the repressive chromatin structure to allow viral reactivation. Interacts with host POU2F1; this interaction enhances RTA/ORF50-mediated transactivation of several viral promoters including K-bZIP promoter.

Its subcellular location is the host nucleus. The enzyme catalyses S-ubiquitinyl-[E2 ubiquitin-conjugating enzyme]-L-cysteine + [acceptor protein]-L-lysine = [E2 ubiquitin-conjugating enzyme]-L-cysteine + N(6)-ubiquitinyl-[acceptor protein]-L-lysine.. Its function is as follows. Transcriptional transactivator that is necessary and sufficient for reactivation of the virus from latency. Acts post-transcriptionally and transcriptionally to regulate viral lytic gene expression and synergistically with ORF57 activates certain early and late viral promoters including its own promoter. Autostimulation on its promoter is mediated by the formation of a ternary complex between ORF50 and the cellular components HGMB1 and POU2F1. Also possesses a bimodal activity in targeting proteins for degradation through using its own E3 ligase activity or by stabilizing and chaperoning host E3 ligases. These activities help to subvert the host innate and adaptive immune responses while also modulating the host transcriptome and protein landscape to promote virus production. For instance, targets the host SMC5/6 complex for ubiquitination and subsequent degradation through the ubiquitin-proteasome during reactivation while during latency, host SMC5/6 complex binds to the viral episome and condenses viral chromatin, creating a repressive chromatin structure to silence genome transcription. Hijacks the cellular E3 ligase complex RNF20/40 to increase the level of transcriptionally active RNA polymerase II on viral gene promoters thereby facilitating lytic gene expression. Acts as a SUMO-targeting ubiquitin ligase and affects general sumoylation of cellular proteins. Promotes the polyubiquitination and subsequent degradation of host MYD88 and thereby inhibits MYD88-mediated TLR4 signaling. Induces the degradation of vFLIP/ORF71 together with cellular ubiquitin ligase ITCH to prevent vFLIP-induced NF-kappa-B signaling. The chain is Replication and transcription activator (ORF50) from Homo sapiens (Human).